The sequence spans 490 residues: Betaine aldehyde dehydrogenase (490 aa).

K(+)-binding residues include Thr-26, Ile-27, and Asp-93. 150 to 152 is an NAD(+) binding site; the sequence is GAW. Lys-162 serves as the catalytic Charge relay system. 176–179 contacts NAD(+); the sequence is KPSE. Residue Val-180 participates in K(+) binding. 230-233 is a binding site for NAD(+); it reads GVAS. Leu-246 contributes to the K(+) binding site. Glu-252 serves as the catalytic Proton acceptor. NAD(+) contacts are provided by Gly-254, Cys-286, and Glu-387. Cys-286 (nucleophile) is an active-site residue. Cys-286 carries the post-translational modification Cysteine sulfenic acid (-SOH). Residues Lys-457 and Gly-460 each contribute to the K(+) site. Glu-464 acts as the Charge relay system in catalysis.

The protein belongs to the aldehyde dehydrogenase family. In terms of assembly, dimer of dimers. It depends on K(+) as a cofactor.

The enzyme catalyses betaine aldehyde + NAD(+) + H2O = glycine betaine + NADH + 2 H(+). Its pathway is amine and polyamine biosynthesis; betaine biosynthesis via choline pathway; betaine from betaine aldehyde: step 1/1. Its function is as follows. Involved in the biosynthesis of the osmoprotectant glycine betaine. Catalyzes the irreversible oxidation of betaine aldehyde to the corresponding acid. The polypeptide is Betaine aldehyde dehydrogenase (Escherichia coli O8 (strain IAI1)).